Here is a 325-residue protein sequence, read N- to C-terminus: SPbeta prophage-derived uncharacterized protein YopR (325 aa).

The protein is SPbeta prophage-derived uncharacterized protein YopR (yopR) of Bacillus subtilis (strain 168).